We begin with the raw amino-acid sequence, 340 residues long: Small ribosomal subunit biogenesis GTPase RsgA (340 aa).

Residues 20 to 34 are compositionally biased toward basic and acidic residues; it reads ERAERAERRARRDDT. The segment at 20–42 is disordered; it reads ERAERAERRARRDDTSLDAGDYG. The 159-residue stretch at 116–274 folds into the CP-type G domain; sequence RGQLKPVAAN…LIDSPGIREF (159 aa). GTP-binding positions include 163–166 and 216–224; these read NKTD and GQSGVGKSS. Zn(2+)-binding residues include C298, C303, H305, and C311.

It belongs to the TRAFAC class YlqF/YawG GTPase family. RsgA subfamily. Monomer. Associates with 30S ribosomal subunit, binds 16S rRNA. Zn(2+) serves as cofactor.

The protein resides in the cytoplasm. Its function is as follows. One of several proteins that assist in the late maturation steps of the functional core of the 30S ribosomal subunit. Helps release RbfA from mature subunits. May play a role in the assembly of ribosomal proteins into the subunit. Circularly permuted GTPase that catalyzes slow GTP hydrolysis, GTPase activity is stimulated by the 30S ribosomal subunit. The chain is Small ribosomal subunit biogenesis GTPase RsgA from Chromohalobacter salexigens (strain ATCC BAA-138 / DSM 3043 / CIP 106854 / NCIMB 13768 / 1H11).